A 481-amino-acid chain; its full sequence is UDP-glucose 6-dehydrogenase 1 (481 aa).

Residues 8 to 13 (GAGYVG), Asp-33, Arg-38, 86 to 90 (VNTPT), 127 to 128 (ST), and Glu-161 contribute to the NAD(+) site. Residues 157–161 (EFLAE), 216–223 (KLAANAFL), and 256–269 (RIGP…VGFG) each bind substrate. Cys-272 acts as the Nucleophile in catalysis. An NAD(+)-binding site is contributed by 272–275 (CFQK). 334–335 (FK) is a substrate binding site. Arg-342 provides a ligand contact to NAD(+). Arg-448 contributes to the substrate binding site.

The protein belongs to the UDP-glucose/GDP-mannose dehydrogenase family.

It carries out the reaction UDP-alpha-D-glucose + 2 NAD(+) + H2O = UDP-alpha-D-glucuronate + 2 NADH + 3 H(+). It participates in nucleotide-sugar biosynthesis; UDP-alpha-D-glucuronate biosynthesis; UDP-alpha-D-glucuronate from UDP-alpha-D-glucose: step 1/1. Inhibited by UDP-xylose. In terms of biological role, involved in the biosynthesis of UDP-glucuronic acid (UDP-GlcA), providing nucleotide sugars for cell-wall polymers. This Arabidopsis thaliana (Mouse-ear cress) protein is UDP-glucose 6-dehydrogenase 1 (UGD1).